A 184-amino-acid polypeptide reads, in one-letter code: Large ribosomal subunit protein uL6 (184 aa).

The protein belongs to the universal ribosomal protein uL6 family. In terms of assembly, part of the 50S ribosomal subunit.

This protein binds to the 23S rRNA, and is important in its secondary structure. It is located near the subunit interface in the base of the L7/L12 stalk, and near the tRNA binding site of the peptidyltransferase center. This is Large ribosomal subunit protein uL6 from Thermococcus kodakarensis (strain ATCC BAA-918 / JCM 12380 / KOD1) (Pyrococcus kodakaraensis (strain KOD1)).